Reading from the N-terminus, the 286-residue chain is 2-dehydro-3-deoxyphosphooctonate aldolase (286 aa).

Belongs to the KdsA family.

Its subcellular location is the cytoplasm. It carries out the reaction D-arabinose 5-phosphate + phosphoenolpyruvate + H2O = 3-deoxy-alpha-D-manno-2-octulosonate-8-phosphate + phosphate. It participates in carbohydrate biosynthesis; 3-deoxy-D-manno-octulosonate biosynthesis; 3-deoxy-D-manno-octulosonate from D-ribulose 5-phosphate: step 2/3. Its pathway is bacterial outer membrane biogenesis; lipopolysaccharide biosynthesis. This chain is 2-dehydro-3-deoxyphosphooctonate aldolase, found in Haemophilus ducreyi (strain 35000HP / ATCC 700724).